The chain runs to 314 residues: 4-hydroxy-3-methylbut-2-enyl diphosphate reductase (314 aa).

Cys-12 contributes to the [4Fe-4S] cluster binding site. (2E)-4-hydroxy-3-methylbut-2-enyl diphosphate-binding residues include His-41 and His-74. Dimethylallyl diphosphate-binding residues include His-41 and His-74. His-41 and His-74 together coordinate isopentenyl diphosphate. A [4Fe-4S] cluster-binding site is contributed by Cys-96. His-124 serves as a coordination point for (2E)-4-hydroxy-3-methylbut-2-enyl diphosphate. Residue His-124 participates in dimethylallyl diphosphate binding. His-124 provides a ligand contact to isopentenyl diphosphate. Residue Glu-126 is the Proton donor of the active site. (2E)-4-hydroxy-3-methylbut-2-enyl diphosphate is bound at residue Thr-167. Position 197 (Cys-197) interacts with [4Fe-4S] cluster. (2E)-4-hydroxy-3-methylbut-2-enyl diphosphate is bound by residues Ser-225, Ser-226, Asn-227, and Ser-269. Residues Ser-225, Ser-226, Asn-227, and Ser-269 each coordinate dimethylallyl diphosphate. The isopentenyl diphosphate site is built by Ser-225, Ser-226, Asn-227, and Ser-269.

Belongs to the IspH family. [4Fe-4S] cluster serves as cofactor.

It carries out the reaction isopentenyl diphosphate + 2 oxidized [2Fe-2S]-[ferredoxin] + H2O = (2E)-4-hydroxy-3-methylbut-2-enyl diphosphate + 2 reduced [2Fe-2S]-[ferredoxin] + 2 H(+). The enzyme catalyses dimethylallyl diphosphate + 2 oxidized [2Fe-2S]-[ferredoxin] + H2O = (2E)-4-hydroxy-3-methylbut-2-enyl diphosphate + 2 reduced [2Fe-2S]-[ferredoxin] + 2 H(+). Its pathway is isoprenoid biosynthesis; dimethylallyl diphosphate biosynthesis; dimethylallyl diphosphate from (2E)-4-hydroxy-3-methylbutenyl diphosphate: step 1/1. It functions in the pathway isoprenoid biosynthesis; isopentenyl diphosphate biosynthesis via DXP pathway; isopentenyl diphosphate from 1-deoxy-D-xylulose 5-phosphate: step 6/6. Its function is as follows. Catalyzes the conversion of 1-hydroxy-2-methyl-2-(E)-butenyl 4-diphosphate (HMBPP) into a mixture of isopentenyl diphosphate (IPP) and dimethylallyl diphosphate (DMAPP). Acts in the terminal step of the DOXP/MEP pathway for isoprenoid precursor biosynthesis. In Haemophilus influenzae (strain ATCC 51907 / DSM 11121 / KW20 / Rd), this protein is 4-hydroxy-3-methylbut-2-enyl diphosphate reductase.